The sequence spans 224 residues: uncharacterized protein (224 aa).

Positions 203–224 are disordered; the sequence is ELKKKKKKKIKKPKEIRNQKNV. A compositionally biased stretch (basic residues) spans 204–214; sequence LKKKKKKKIKK. Positions 215 to 224 are enriched in basic and acidic residues; it reads PKEIRNQKNV.

This is an uncharacterized protein from Mycoplasma genitalium (strain ATCC 33530 / DSM 19775 / NCTC 10195 / G37) (Mycoplasmoides genitalium).